A 100-amino-acid chain; its full sequence is Urease subunit gamma (100 aa).

Belongs to the urease gamma subunit family. As to quaternary structure, heterotrimer of UreA (gamma), UreB (beta) and UreC (alpha) subunits. Three heterotrimers associate to form the active enzyme.

Its subcellular location is the cytoplasm. It catalyses the reaction urea + 2 H2O + H(+) = hydrogencarbonate + 2 NH4(+). It participates in nitrogen metabolism; urea degradation; CO(2) and NH(3) from urea (urease route): step 1/1. The chain is Urease subunit gamma from Staphylococcus xylosus.